Here is a 616-residue protein sequence, read N- to C-terminus: Protein NRT1/ PTR FAMILY 2.11 (616 aa).

Positions Met1–Tyr22 are disordered. 12 consecutive transmembrane segments (helical) span residues Phe59–Phe79, Ala87–Leu107, Leu118–Val138, Gly159–Ile179, Phe205–Val225, Trp233–Ala253, Val349–Ile369, Phe392–Val412, Leu435–Val455, Ala483–Gly503, Phe519–Ile539, and Leu566–Ser586.

The protein belongs to the major facilitator superfamily. Proton-dependent oligopeptide transporter (POT/PTR) (TC 2.A.17) family. As to expression, expressed in roots. Detected in shoots, stems and flowers. Expressed in veins and in the root vasculature with highest expression in lateral branching points.

Its subcellular location is the cell membrane. High-affinity, proton-dependent glucosinolate-specific transporter. Involved in apoplasmic phloem-loading of glucosinolates and in bidirectional long-distance transport of aliphatic but not indole glucosinolates. May be involved in removal of glucosinolates from the xylem in roots. The polypeptide is Protein NRT1/ PTR FAMILY 2.11 (NPF2.11) (Arabidopsis thaliana (Mouse-ear cress)).